The sequence spans 364 residues: Aminomethyltransferase (364 aa).

The protein belongs to the GcvT family. The glycine cleavage system is composed of four proteins: P, T, L and H.

The enzyme catalyses N(6)-[(R)-S(8)-aminomethyldihydrolipoyl]-L-lysyl-[protein] + (6S)-5,6,7,8-tetrahydrofolate = N(6)-[(R)-dihydrolipoyl]-L-lysyl-[protein] + (6R)-5,10-methylene-5,6,7,8-tetrahydrofolate + NH4(+). In terms of biological role, the glycine cleavage system catalyzes the degradation of glycine. This chain is Aminomethyltransferase, found in Photorhabdus laumondii subsp. laumondii (strain DSM 15139 / CIP 105565 / TT01) (Photorhabdus luminescens subsp. laumondii).